Here is a 363-residue protein sequence, read N- to C-terminus: Protein disulfide-isomerase 1 (363 aa).

Positions 1 to 20 (MKILLFVTLIALAFVALCSA) are cleaved as a signal peptide. 2 Thioredoxin domains span residues 21 to 132 (EGNV…NHAK) and 133 to 285 (TNVK…AAAE). Residues Cys51, Cys54, Cys172, and Cys175 each act as nucleophile in the active site. 2 disulfides stabilise this stretch: Cys51–Cys54 and Cys172–Cys175.

The protein belongs to the protein disulfide isomerase family.

It localises to the endoplasmic reticulum lumen. It carries out the reaction Catalyzes the rearrangement of -S-S- bonds in proteins.. Its function is as follows. Participates in the folding of proteins containing disulfide bonds, may be involved in glycosylation, prolyl hydroxylation and triglyceride transfer. This is Protein disulfide-isomerase 1 (pdi1) from Dictyostelium discoideum (Social amoeba).